We begin with the raw amino-acid sequence, 228 residues long: 2-C-methyl-D-erythritol 4-phosphate cytidylyltransferase (228 aa).

Belongs to the IspD/TarI cytidylyltransferase family. IspD subfamily.

The catalysed reaction is 2-C-methyl-D-erythritol 4-phosphate + CTP + H(+) = 4-CDP-2-C-methyl-D-erythritol + diphosphate. Its pathway is isoprenoid biosynthesis; isopentenyl diphosphate biosynthesis via DXP pathway; isopentenyl diphosphate from 1-deoxy-D-xylulose 5-phosphate: step 2/6. In terms of biological role, catalyzes the formation of 4-diphosphocytidyl-2-C-methyl-D-erythritol from CTP and 2-C-methyl-D-erythritol 4-phosphate (MEP). The protein is 2-C-methyl-D-erythritol 4-phosphate cytidylyltransferase of Halalkalibacterium halodurans (strain ATCC BAA-125 / DSM 18197 / FERM 7344 / JCM 9153 / C-125) (Bacillus halodurans).